Consider the following 345-residue polypeptide: Myb/SANT-like DNA-binding domain-containing protein 4 (345 aa).

In terms of domain architecture, Myb-like spans 4-77; the sequence is LKRKRKSNFS…EVKRRYLDWR (74 aa). Residue K9 forms a Glycyl lysine isopeptide (Lys-Gly) (interchain with G-Cter in SUMO2) linkage. Phosphoserine is present on S106. Residues K114 and K142 each participate in a glycyl lysine isopeptide (Lys-Gly) (interchain with G-Cter in SUMO2) cross-link. Residues 141–160 form a disordered region; the sequence is VKVEEEERDPQSPEFEIEEE. Phosphothreonine is present on T188. Residues 203 to 345 are a coiled coil; that stretch reads LLVNIEKQKL…LRIQKEGHLQ (143 aa). Glycyl lysine isopeptide (Lys-Gly) (interchain with G-Cter in SUMO2) cross-links involve residues K237, K254, and K273.

The sequence is that of Myb/SANT-like DNA-binding domain-containing protein 4 (MSANTD4) from Bos taurus (Bovine).